The sequence spans 318 residues: Peroxisomal and mitochondrial division factor 1 (318 aa).

Residues 1–39 (MADVEDRAAKGISDYDQGGVKTTELERKIEDMENKNQEL) are disordered. Residues 1–291 (MADVEDRAAK…QKGSLEAEYQ (291 aa)) lie on the Cytoplasmic side of the membrane. The stretch at 19–260 (GVKTTELERK…KKVEEGNKTV (242 aa)) forms a coiled coil. The span at 23–39 (TELERKIEDMENKNQEL) shows a compositional bias: basic and acidic residues. Residues 292–312 (WPVVAAGSVGAAGLVAATFFV) form a helical membrane-spanning segment. Topologically, residues 313–318 (CYSKLR) are mitochondrial intermembrane.

In terms of assembly, homodimer. Interacts with PMD2.

Its subcellular location is the peroxisome membrane. The protein resides in the mitochondrion outer membrane. In terms of biological role, involved in morphogenesis and proliferation of peroxisomes and mitochondria, independently from the previously defined pathway controlled by the FIS1-DRP3 complex. The protein is Peroxisomal and mitochondrial division factor 1 of Arabidopsis thaliana (Mouse-ear cress).